A 203-amino-acid chain; its full sequence is Holliday junction branch migration complex subunit RuvA (203 aa).

The segment at 1–63 (MYEYLKGLVT…DTDITLFGFY (63 aa)) is domain I. The tract at residues 64–142 (DLDEKQLFQK…DLEQSATLVG (79 aa)) is domain II. The flexible linker stretch occupies residues 143–153 (QTAIDLGSQGD). The domain III stretch occupies residues 153 to 203 (DSPELSDALAALSALGYSAREVKAITPKLTDFAAQTTDQYLREGLRLLMKK).

This sequence belongs to the RuvA family. As to quaternary structure, homotetramer. Forms an RuvA(8)-RuvB(12)-Holliday junction (HJ) complex. HJ DNA is sandwiched between 2 RuvA tetramers; dsDNA enters through RuvA and exits via RuvB. An RuvB hexamer assembles on each DNA strand where it exits the tetramer. Each RuvB hexamer is contacted by two RuvA subunits (via domain III) on 2 adjacent RuvB subunits; this complex drives branch migration. In the full resolvosome a probable DNA-RuvA(4)-RuvB(12)-RuvC(2) complex forms which resolves the HJ.

It is found in the cytoplasm. Its function is as follows. The RuvA-RuvB-RuvC complex processes Holliday junction (HJ) DNA during genetic recombination and DNA repair, while the RuvA-RuvB complex plays an important role in the rescue of blocked DNA replication forks via replication fork reversal (RFR). RuvA specifically binds to HJ cruciform DNA, conferring on it an open structure. The RuvB hexamer acts as an ATP-dependent pump, pulling dsDNA into and through the RuvAB complex. HJ branch migration allows RuvC to scan DNA until it finds its consensus sequence, where it cleaves and resolves the cruciform DNA. The sequence is that of Holliday junction branch migration complex subunit RuvA from Latilactobacillus sakei subsp. sakei (strain 23K) (Lactobacillus sakei subsp. sakei).